The sequence spans 172 residues: S-ribosylhomocysteine lyase (172 aa).

Fe cation is bound by residues His-54, His-58, and Cys-128.

Belongs to the LuxS family. Homodimer. Fe cation serves as cofactor.

It catalyses the reaction S-(5-deoxy-D-ribos-5-yl)-L-homocysteine = (S)-4,5-dihydroxypentane-2,3-dione + L-homocysteine. Its function is as follows. Involved in the synthesis of autoinducer 2 (AI-2) which is secreted by bacteria and is used to communicate both the cell density and the metabolic potential of the environment. The regulation of gene expression in response to changes in cell density is called quorum sensing. Catalyzes the transformation of S-ribosylhomocysteine (RHC) to homocysteine (HC) and 4,5-dihydroxy-2,3-pentadione (DPD). This Vibrio cholerae serotype O1 (strain ATCC 39541 / Classical Ogawa 395 / O395) protein is S-ribosylhomocysteine lyase.